Reading from the N-terminus, the 377-residue chain is Probable purine permease 22 (377 aa).

10 helical membrane-spanning segments follow: residues 39 to 59, 71 to 91, 107 to 127, 128 to 148, 166 to 186, 202 to 222, 238 to 258, 283 to 303, 309 to 329, and 338 to 358; these read WLRVSIYAIFVIFCQPLATVL, TYVVTLLQLIGFPVLILFRFF, SPSFTTLASVYLCTGLLVSAY, AYLSAVGLLYLPVSTFSLILA, FTPLIVNSLFLLTVSSALLVV, VIGFICTIGASAGIGLVLSLI, VLDLANYQSLVATCVVLIGLF, TLASAAIFWQVYTVGCVGLIF, FSNSITAVGLPIVPVVAVIVF, and IFSIILAIWGFLSFVYQHYLD.

Belongs to the purine permeases (TC 2.A.7.14) family.

It localises to the membrane. The chain is Probable purine permease 22 (PUP22) from Arabidopsis thaliana (Mouse-ear cress).